A 439-amino-acid chain; its full sequence is Probable N-acetylmuramidase (439 aa).

A signal peptide spans 1-57 (MPVSRIKVKNRHLKKKAKKPLAFYKPATKFAGAVLIAGTLTTTHELLLQQTSPMVQA). 2 disordered regions span residues 218–241 (SAGT…TSST) and 287–320 (SSSS…PASQ). Positions 241–284 (TTYTVKSGDTLWGISQKYGISVAQIQSANNLKSTVIYIGQKLVL) constitute a LysM 1 domain. Over residues 287 to 319 (SSSSSNTNSSTSSGNSAGTTTPTTSVTPAKPAS) the composition is skewed to low complexity. Residues 321-364 (TTIKVKSGDTLWGLSVKYKTTIAQLKSWNHLNSDTIFIGQNLIV) form the LysM 2 domain. Residues 372–393 (SSSTGSSSASTSSTSNSSAASN) form a disordered region. The region spanning 395–438 (SIHKVVKGDTLWGLSQKSGSPIASIKAWNHLSSDTILIGQYLRI) is the LysM 3 domain.

The protein belongs to the glycosyl hydrolase 73 family.

The protein resides in the secreted. The enzyme catalyses Hydrolysis of (1-&gt;4)-beta-linkages between N-acetylmuramic acid and N-acetyl-D-glucosamine residues in a peptidoglycan and between N-acetyl-D-glucosamine residues in chitodextrins.. Functionally, required for cell separation during growth. The protein is Probable N-acetylmuramidase (acmA) of Lactococcus lactis subsp. lactis (strain IL1403) (Streptococcus lactis).